Here is a 602-residue protein sequence, read N- to C-terminus: uncharacterized protein (602 aa).

Belongs to the IIV-6 098R family.

This is an uncharacterized protein from Acheta domesticus (House cricket).